Here is a 212-residue protein sequence, read N- to C-terminus: Peptide methionine sulfoxide reductase MsrA (212 aa).

The active site involves C52.

The protein belongs to the MsrA Met sulfoxide reductase family.

The enzyme catalyses L-methionyl-[protein] + [thioredoxin]-disulfide + H2O = L-methionyl-(S)-S-oxide-[protein] + [thioredoxin]-dithiol. It catalyses the reaction [thioredoxin]-disulfide + L-methionine + H2O = L-methionine (S)-S-oxide + [thioredoxin]-dithiol. In terms of biological role, has an important function as a repair enzyme for proteins that have been inactivated by oxidation. Catalyzes the reversible oxidation-reduction of methionine sulfoxide in proteins to methionine. The sequence is that of Peptide methionine sulfoxide reductase MsrA from Yersinia enterocolitica serotype O:8 / biotype 1B (strain NCTC 13174 / 8081).